The primary structure comprises 396 residues: Phosphopentomutase (396 aa).

Residues Asp-13, Asp-288, His-293, Asp-329, His-330, and His-341 each contribute to the Mn(2+) site.

Belongs to the phosphopentomutase family. It depends on Mn(2+) as a cofactor.

The protein localises to the cytoplasm. The enzyme catalyses 2-deoxy-alpha-D-ribose 1-phosphate = 2-deoxy-D-ribose 5-phosphate. It catalyses the reaction alpha-D-ribose 1-phosphate = D-ribose 5-phosphate. It functions in the pathway carbohydrate degradation; 2-deoxy-D-ribose 1-phosphate degradation; D-glyceraldehyde 3-phosphate and acetaldehyde from 2-deoxy-alpha-D-ribose 1-phosphate: step 1/2. Functionally, isomerase that catalyzes the conversion of deoxy-ribose 1-phosphate (dRib-1-P) and ribose 1-phosphate (Rib-1-P) to deoxy-ribose 5-phosphate (dRib-5-P) and ribose 5-phosphate (Rib-5-P), respectively. The protein is Phosphopentomutase of Clostridium perfringens (strain ATCC 13124 / DSM 756 / JCM 1290 / NCIMB 6125 / NCTC 8237 / Type A).